Here is a 202-residue protein sequence, read N- to C-terminus: Flagellar transcriptional regulator FlhC (202 aa).

The Zn(2+) site is built by C137, C140, C157, and C160.

Belongs to the FlhC family. As to quaternary structure, heterohexamer composed of two FlhC and four FlhD subunits. Each FlhC binds a FlhD dimer, forming a heterotrimer, and a hexamer assembles by dimerization of two heterotrimers. Requires Zn(2+) as cofactor.

It is found in the cytoplasm. In terms of biological role, functions in complex with FlhD as a master transcriptional regulator that regulates transcription of several flagellar and non-flagellar operons by binding to their promoter region. Activates expression of class 2 flagellar genes, including fliA, which is a flagellum-specific sigma factor that turns on the class 3 genes. Also regulates genes whose products function in a variety of physiological pathways. This is Flagellar transcriptional regulator FlhC from Variovorax paradoxus (strain S110).